Consider the following 78-residue polypeptide: Large ribosomal subunit protein bL28 (78 aa).

The protein belongs to the bacterial ribosomal protein bL28 family.

In Histophilus somni (strain 129Pt) (Haemophilus somnus), this protein is Large ribosomal subunit protein bL28.